The chain runs to 202 residues: Adenylyl-sulfate kinase (202 aa).

31-38 (GLSASGKS) provides a ligand contact to ATP. The active-site Phosphoserine intermediate is the Ser105.

This sequence belongs to the APS kinase family.

The catalysed reaction is adenosine 5'-phosphosulfate + ATP = 3'-phosphoadenylyl sulfate + ADP + H(+). The protein operates within sulfur metabolism; hydrogen sulfide biosynthesis; sulfite from sulfate: step 2/3. Its function is as follows. Catalyzes the synthesis of activated sulfate. The sequence is that of Adenylyl-sulfate kinase (MET14) from Saccharomyces cerevisiae (strain ATCC 204508 / S288c) (Baker's yeast).